Here is a 264-residue protein sequence, read N- to C-terminus: MDTRPIGFLDSGVGGLTVVCELIRQLPHEKIVYIGDSARAPYGPRPKKQIKEYTWELVNFLLTQNVKMIVFACNTATAVAWEEVKAALDIPVLGVVLPGASAAIKSTTKGQVGVIGTPMTVASDIYRKKIQLLAPSVQVRSLACPKFVPIVESNEMCSSIAKKIVYDSLAPLVGKIDTLVLGCTHYPLLRPIIQNVMGPSVKLIDSGAECVRDISVLLNYFDINGNYHQKAVKHRFFTTANPEIFQEIASIWLKQKINVEHVTL.

Substrate contacts are provided by residues 10-11 (DS) and 42-43 (YG). Cys-73 serves as the catalytic Proton donor/acceptor. Residue 74-75 (NT) participates in substrate binding. The Proton donor/acceptor role is filled by Cys-183. Substrate is bound at residue 184-185 (TH).

It belongs to the aspartate/glutamate racemases family.

It carries out the reaction L-glutamate = D-glutamate. The protein operates within cell wall biogenesis; peptidoglycan biosynthesis. Provides the (R)-glutamate required for cell wall biosynthesis. This is Glutamate racemase from Streptococcus pyogenes serotype M3 (strain ATCC BAA-595 / MGAS315).